The sequence spans 560 residues: DNA ligase B (560 aa).

Catalysis depends on lysine 124, which acts as the N6-AMP-lysine intermediate.

This sequence belongs to the NAD-dependent DNA ligase family. LigB subfamily.

The catalysed reaction is NAD(+) + (deoxyribonucleotide)n-3'-hydroxyl + 5'-phospho-(deoxyribonucleotide)m = (deoxyribonucleotide)n+m + AMP + beta-nicotinamide D-nucleotide.. Its function is as follows. Catalyzes the formation of phosphodiester linkages between 5'-phosphoryl and 3'-hydroxyl groups in double-stranded DNA using NAD as a coenzyme and as the energy source for the reaction. The polypeptide is DNA ligase B (Escherichia coli O1:K1 / APEC).